The chain runs to 533 residues: Glucose-6-phosphate exchanger SLC37A1 (533 aa).

The chain crosses the membrane as a helical span at residues 18 to 38 (QWYRAFIFILTFLLYASFHLS). N81 carries N-linked (GlcNAc...) asparagine glycosylation. The next 4 helical transmembrane spans lie at 100–120 (GALD…SGII), 129–149 (YLTF…LGYF), 157–177 (FYVV…PSVV), and 222–242 (SFVV…LFLI). N263 is a glycosylation site (N-linked (GlcNAc...) asparagine). Transmembrane regions (helical) follow at residues 304–324 (VVIL…TGAL), 334–354 (LCLL…PLYI), 366–386 (GELS…AGVI), 394–414 (ASTC…FSTV), 423–443 (IAML…ITTA), 466–486 (AIID…AGLL), and 490–510 (GWSN…LFLI).

This sequence belongs to the major facilitator superfamily. Organophosphate:Pi antiporter (OPA) (TC 2.A.1.4) family. As to expression, expressed in numerous tissues, with highest expression in pancreas, kidney, bone marrow, spleen, liver, small intestine, as well as in fetal brain, liver and spleen.

It localises to the endoplasmic reticulum membrane. It catalyses the reaction D-glucose 6-phosphate(in) + phosphate(out) = D-glucose 6-phosphate(out) + phosphate(in). Its activity is regulated as follows. Inhibited by vanadate but not by chlorogenic acid. Its function is as follows. Inorganic phosphate and glucose-6-phosphate antiporter. May transport cytoplasmic glucose-6-phosphate into the lumen of the endoplasmic reticulum and translocate inorganic phosphate into the opposite direction. Independent of a lumenal glucose-6-phosphatase. May not play a role in homeostatic regulation of blood glucose levels. This is Glucose-6-phosphate exchanger SLC37A1 from Homo sapiens (Human).